The chain runs to 312 residues: MDIIFYHPTFDTQWWIEALRKAIPQARVRAWKSGDNDSADYALVWHPPVEMLAGRDLKAVFALGAGVDSILSKLQAHPEMLNPSVPLFRLEDTGMGEQMQEYAVSQVLHWFRRFDDYRIQQNSSHWQPLPEYHREDFTIGILGAGVLGSKVAQSLQTWRFPLRCWSRTRKSWPGVQSFAGREELSAFLSQCRVLINLLPNTPETVGIINQQLLEKLPDGAYLLNLARGVHVVEDDLLAALDSGKVKGAMLDVFNREPLPPESPLWQHPRVTITPHVAAITRPAEAVEYISRTIAQLEKGERVCGQVDRARGY.

Arg-227 is an active-site residue. Catalysis depends on His-275, which acts as the Proton donor.

This sequence belongs to the D-isomer specific 2-hydroxyacid dehydrogenase family. GhrA subfamily.

The protein resides in the cytoplasm. It carries out the reaction glycolate + NADP(+) = glyoxylate + NADPH + H(+). It catalyses the reaction (R)-glycerate + NAD(+) = 3-hydroxypyruvate + NADH + H(+). The enzyme catalyses (R)-glycerate + NADP(+) = 3-hydroxypyruvate + NADPH + H(+). Functionally, catalyzes the NADPH-dependent reduction of glyoxylate and hydroxypyruvate into glycolate and glycerate, respectively. Inactive towards 2-oxo-D-gluconate, 2-oxoglutarate, oxaloacetate and pyruvate. Only D- and L-glycerate are involved in the oxidative activity with NADP. Activity with NAD is very low. This Escherichia coli (strain K12) protein is Glyoxylate/hydroxypyruvate reductase A (ghrA).